The following is a 364-amino-acid chain: tRNA 2-selenouridine synthase (364 aa).

Residues 15–138 enclose the Rhodanese domain; it reads FVNDTPLMDM…LRRFLIETID (124 aa). Catalysis depends on C98, which acts as the S-selanylcysteine intermediate.

The protein belongs to the SelU family. Monomer.

The catalysed reaction is 5-methylaminomethyl-2-thiouridine(34) in tRNA + selenophosphate + (2E)-geranyl diphosphate + H2O + H(+) = 5-methylaminomethyl-2-selenouridine(34) in tRNA + (2E)-thiogeraniol + phosphate + diphosphate. It catalyses the reaction 5-methylaminomethyl-2-thiouridine(34) in tRNA + (2E)-geranyl diphosphate = 5-methylaminomethyl-S-(2E)-geranyl-thiouridine(34) in tRNA + diphosphate. It carries out the reaction 5-methylaminomethyl-S-(2E)-geranyl-thiouridine(34) in tRNA + selenophosphate + H(+) = 5-methylaminomethyl-2-(Se-phospho)selenouridine(34) in tRNA + (2E)-thiogeraniol. The enzyme catalyses 5-methylaminomethyl-2-(Se-phospho)selenouridine(34) in tRNA + H2O = 5-methylaminomethyl-2-selenouridine(34) in tRNA + phosphate. Its function is as follows. Involved in the post-transcriptional modification of the uridine at the wobble position (U34) of tRNA(Lys), tRNA(Glu) and tRNA(Gln). Catalyzes the conversion of 2-thiouridine (S2U-RNA) to 2-selenouridine (Se2U-RNA). Acts in a two-step process involving geranylation of 2-thiouridine (S2U) to S-geranyl-2-thiouridine (geS2U) and subsequent selenation of the latter derivative to 2-selenouridine (Se2U) in the tRNA chain. This is tRNA 2-selenouridine synthase from Photobacterium profundum (strain SS9).